We begin with the raw amino-acid sequence, 485 residues long: Glycogen synthase (485 aa).

Residue Lys18 participates in ADP-alpha-D-glucose binding.

Belongs to the glycosyltransferase 1 family. Bacterial/plant glycogen synthase subfamily.

It catalyses the reaction [(1-&gt;4)-alpha-D-glucosyl](n) + ADP-alpha-D-glucose = [(1-&gt;4)-alpha-D-glucosyl](n+1) + ADP + H(+). Its pathway is glycan biosynthesis; glycogen biosynthesis. In terms of biological role, synthesizes alpha-1,4-glucan chains using ADP-glucose. In Dechloromonas aromatica (strain RCB), this protein is Glycogen synthase.